We begin with the raw amino-acid sequence, 204 residues long: MLKKIALTLCPAIVGSLLFFTAPASAHVSVKPAESAAGSWETYTMKVPSEKNLPTTKVVLKMPKDVEFQQYEPIPGWKVSTQKHDDKSVSVTWEATDGGIQEGQFQQFTFVAKNPDKAEEAAWDAYQYYKDGSIVEWTGDEDADTPHSITNITSAKQVTDEHGATKTEDDSENSGSSALDITAMVLSAAAIILSVAALVKKKRA.

Residues 1 to 26 form the signal peptide; that stretch reads MLKKIALTLCPAIVGSLLFFTAPASA. His-27 and Glu-50 together coordinate Cu(2+). Residues 27–178 lie on the Extracellular side of the membrane; that stretch reads HVSVKPAESA…DDSENSGSSA (152 aa). A disordered region spans residues 146 to 176; sequence PHSITNITSAKQVTDEHGATKTEDDSENSGS. The segment covering 147 to 157 has biased composition (polar residues); it reads HSITNITSAKQ. Basic and acidic residues predominate over residues 158 to 168; the sequence is VTDEHGATKTE. The chain crosses the membrane as a helical span at residues 179–199; it reads LDITAMVLSAAAIILSVAALV. Residues 200–204 lie on the Cytoplasmic side of the membrane; that stretch reads KKKRA.

Its subcellular location is the cell membrane. Its function is as follows. Copper-binding protein that probably plays a role in copper homeostasis. May act as metallochaperone, possibly to facilitate copper uptake via the CutJ/YcnJ importer. Preferentially binds Cu in its oxidized Cu(II) state in a 1:1 stoichiometry. This Bacillus subtilis (strain 168) protein is Copper-binding protein CutI.